The primary structure comprises 226 residues: Enolase-phosphatase E1 (226 aa).

This sequence belongs to the HAD-like hydrolase superfamily. MasA/MtnC family. Monomer. Mg(2+) is required as a cofactor.

It carries out the reaction 5-methylsulfanyl-2,3-dioxopentyl phosphate + H2O = 1,2-dihydroxy-5-(methylsulfanyl)pent-1-en-3-one + phosphate. Its pathway is amino-acid biosynthesis; L-methionine biosynthesis via salvage pathway; L-methionine from S-methyl-5-thio-alpha-D-ribose 1-phosphate: step 3/6. It functions in the pathway amino-acid biosynthesis; L-methionine biosynthesis via salvage pathway; L-methionine from S-methyl-5-thio-alpha-D-ribose 1-phosphate: step 4/6. Functionally, bifunctional enzyme that catalyzes the enolization of 2,3-diketo-5-methylthiopentyl-1-phosphate (DK-MTP-1-P) into the intermediate 2-hydroxy-3-keto-5-methylthiopentenyl-1-phosphate (HK-MTPenyl-1-P), which is then dephosphorylated to form the acireductone 1,2-dihydroxy-3-keto-5-methylthiopentene (DHK-MTPene). This is Enolase-phosphatase E1 from Shewanella putrefaciens (strain CN-32 / ATCC BAA-453).